Reading from the N-terminus, the 747-residue chain is Histone-lysine N-methyltransferase EZH1 (747 aa).

The interval 188–231 (DEEEEGHNDTSDGKQDDSKEDLPVTRKRKRHAIEGNKKSSKKQF) is disordered. Over residues 194–211 (HNDTSDGKQDDSKEDLPV) the composition is skewed to basic and acidic residues. Residue Lys327 forms a Glycyl lysine isopeptide (Lys-Gly) (interchain with G-Cter in SUMO2) linkage. The interval 378 to 421 (SAVAETKEGDSDRDTGNDWASSSSEANSRCQTPTKQKASPAPPQ) is disordered. Residues 382-393 (ETKEGDSDRDTG) show a composition bias toward basic and acidic residues. The segment covering 395 to 414 (DWASSSSEANSRCQTPTKQK) has biased composition (polar residues). Positions 491-496 (QKKKRK) match the Nuclear localization signal motif. Positions 504–606 (CRKIQLKKDN…CKVVSCKNCS (103 aa)) constitute a CXC domain. The SET domain maps to 613–728 (KHLLLAPSDV…AGEELFLDYR (116 aa)).

The protein belongs to the class V-like SAM-binding methyltransferase superfamily. Histone-lysine methyltransferase family. EZ subfamily. As to quaternary structure, component of the PRC2/EED-EZH1 complex, which includes EED, EZH1, SUZ12, RBBP4 and AEBP2. The PRC2/EED-EZH1 is less abundant than the PRC2/EED-EZH2 complex, has weak methyltransferase activity and compacts chromatin in the absence of the methyltransferase cofactor S-adenosyl-L-methionine (SAM). Interacts with EZHIP; the interaction blocks EZH1 methyltransferase activity.

It is found in the nucleus. The enzyme catalyses L-lysyl(27)-[histone H3] + 3 S-adenosyl-L-methionine = N(6),N(6),N(6)-trimethyl-L-lysyl(27)-[histone H3] + 3 S-adenosyl-L-homocysteine + 3 H(+). Functionally, polycomb group (PcG) protein. Catalytic subunit of the PRC2/EED-EZH1 complex, which methylates 'Lys-27' of histone H3, leading to transcriptional repression of the affected target gene. Able to mono-, di- and trimethylate 'Lys-27' of histone H3 to form H3K27me1, H3K27me2 and H3K27me3, respectively. Required for embryonic stem cell derivation and self-renewal, suggesting that it is involved in safeguarding embryonic stem cell identity. Compared to EZH2-containing complexes, it is less abundant in embryonic stem cells, has weak methyltransferase activity and plays a less critical role in forming H3K27me3, which is required for embryonic stem cell identity and proper differentiation. In Pongo abelii (Sumatran orangutan), this protein is Histone-lysine N-methyltransferase EZH1 (EZH1).